The chain runs to 279 residues: Digeranylgeranylglyceryl phosphate synthase (279 aa).

8 helical membrane passes run 5–25 (GFFAITRPANSVVAGLAAIVA), 27–47 (LIATGTLVYGVLLLMAVVLLV), 90–110 (FLLGLAVSVFTTPLCMGIALV), 127–147 (FFGNAAVAFLSASIFLFGGAY), 148–168 (AGWHALLDMLPIAAITFLAML), 198–218 (KTALIAFACTAFAIAASAVPY), 219–239 (LWWGGWYLAGIAAVDLVILFA), and 259–279 (TLLKLGMFASLVVFTLSAVFL).

The protein belongs to the UbiA prenyltransferase family. DGGGP synthase subfamily. Mg(2+) serves as cofactor.

The protein resides in the cell membrane. It catalyses the reaction sn-3-O-(geranylgeranyl)glycerol 1-phosphate + (2E,6E,10E)-geranylgeranyl diphosphate = 2,3-bis-O-(geranylgeranyl)-sn-glycerol 1-phosphate + diphosphate. Its pathway is membrane lipid metabolism; glycerophospholipid metabolism. Prenyltransferase that catalyzes the transfer of the geranylgeranyl moiety of geranylgeranyl diphosphate (GGPP) to the C2 hydroxyl of (S)-3-O-geranylgeranylglyceryl phosphate (GGGP). This reaction is the second ether-bond-formation step in the biosynthesis of archaeal membrane lipids. This is Digeranylgeranylglyceryl phosphate synthase from Methanoregula boonei (strain DSM 21154 / JCM 14090 / 6A8).